Reading from the N-terminus, the 228-residue chain is MKTIGILGGMGPLATAELFRRIVIKTPAKRDQEHPKVIIFNNPQIPDRTAYILGKGEDPRPQLIWTAKRLEECGADFIIMPCNTAHAFVEDIRKAIKIPIISMIEETAKKVKELGFKKAGLLATTGTIVSGVYEKEFSKYGVEIMTPTEDEQKDVMRGIYEGVKAGNLKLGRELLLKTAKILEERGAECIIAGCTEVSVVLKQDDLKVPLIDPMDVIAEVAVKVALEK.

47-49 (DRT) serves as a coordination point for substrate. The active-site Proton donor/acceptor is the cysteine 82. Substrate-binding positions include 83–85 (NTA) and lysine 164. The active-site Proton donor/acceptor is the cysteine 194.

It belongs to the aspartate/glutamate racemases family. Homodimer. The existence of the interchain disulfide bond seen in the crystal structures is uncertain, but disulfide bonds have been reported for cytoplasmic proteins from thermophiles.

The catalysed reaction is L-aspartate = D-aspartate. With respect to regulation, weakly inhibited by citrate, but not by asparagine. In Pyrococcus horikoshii (strain ATCC 700860 / DSM 12428 / JCM 9974 / NBRC 100139 / OT-3), this protein is Aspartate racemase.